A 469-amino-acid chain; its full sequence is Mitochondrial-processing peptidase subunit beta (469 aa).

H78 is a binding site for Zn(2+). E81 (proton acceptor) is an active-site residue. Positions 82 and 159 each coordinate Zn(2+).

The protein belongs to the peptidase M16 family. As to quaternary structure, heterodimer of alpha and beta subunits, forming the mitochondrial processing protease (MPP) in which subunit alpha is involved in substrate recognition and binding and subunit beta is the catalytic subunit. mppB is probably also part of the cytochrome bc1 complex as a core I protein in the mitochondrial inner membrane. It depends on Zn(2+) as a cofactor.

It is found in the mitochondrion inner membrane. The protein localises to the mitochondrion matrix. The enzyme catalyses Release of N-terminal transit peptides from precursor proteins imported into the mitochondrion, typically with Arg in position P2.. Binding to alpha subunit is required for catalytic activity. In terms of biological role, catalytic subunit of the essential mitochondrial processing protease (MPP), which cleaves the mitochondrial sequence off newly imported precursors proteins. Preferentially, cleaves after an arginine at position P2. Plays an essential role in mitochondrial biogenesis. The sequence is that of Mitochondrial-processing peptidase subunit beta (mppB) from Dictyostelium discoideum (Social amoeba).